Here is a 920-residue protein sequence, read N- to C-terminus: MPLKKLESSNNQTIIAEEVALLKEMLENITRRMIGDDAFTVIESIMVLSEKQDYIELEKVVANISNQEMEVISRYFSILPLLINISEDVDLAYEINHQNNTDTDYLGKLALTIKDLAGKDNGKDILEQVNVVPVLTAHPTQVQRKTILELTTHIHKLLRKYRDAKAGVINLEKWRQELYRYIEMIMQTDIIREKKLQVKNEIKNVMQYYDGSLIQAVTKLTTEYKNLAQKHGLELDNPKPITMGMWIGGDRDGNPFVTAETLCLSATVQSEVILNYYIDKLAALYRTFSLSSTLVQPNSEVERLASLSQDQSIYRGNEPYRRAFHYIQSRLKQTQIQLTNQPAARMSSSVGLNTSAWSSPASLENPILAYDSPVDFKADLKAIEQSLLDNGNSALIEGDLREVMQAVDIFGFFLASIDMRQDSSVQEACVAELLKGANIVDDYSSLSETEKCDVLLQQLMEEPRTLSSAAVAKSDLLEKELAIYTTARELKDKLGEEVIKQHIISHTESVSDMFELAIMLKEVGLVDQQRARVQIVPLFETIEDLDNARDIMAAYLSHDIVKSWIATNRNYQEIMLGYSDSNKDGGYLASGWTLYKAQNELTAIGEEHGVKITFFHGRGGTVGRGGGPSYDAITSQPFGSIKDRIRLTEQGEIIENKYGNKDVAYYHLEMLISASINRMVTQMITDPNEIDSFREIMDSIVADSNTIYRKLVFDNPHFYDYFFEASPIKEVSSLNIGSRPAARKTITEITGLRAIPWVFSWSQNRIMFPGWYGVGSAFKRYIDRAQGNLERLQHMYQTWPFFHSLLSNVDMVLSKSNMNIAFQYAQLAESQDVRDVFYEILDEWQLTKNVILAIQDHDDLLEDNPSLKHSLKSRLPYFNVLNYIQIELIKRWRNNQLDENDEKLIHTTINGIATGLRNSG.

Residues H138 and K583 contribute to the active site.

Belongs to the PEPCase type 1 family. Mg(2+) serves as cofactor.

It carries out the reaction oxaloacetate + phosphate = phosphoenolpyruvate + hydrogencarbonate. Its function is as follows. Forms oxaloacetate, a four-carbon dicarboxylic acid source for the tricarboxylic acid cycle. The sequence is that of Phosphoenolpyruvate carboxylase from Streptococcus pyogenes serotype M3 (strain ATCC BAA-595 / MGAS315).